We begin with the raw amino-acid sequence, 219 residues long: Acetylxylan esterase (219 aa).

Ser-15 functions as the Nucleophile in the catalytic mechanism. Catalysis depends on charge relay system residues Asp-191 and His-194.

It belongs to the 'GDSL' lipolytic enzyme family. As to quaternary structure, homooctamer, presenting a unique donut-shaped quaternary structure built of two staggered tetrameric rings. The eight active sites are organized in four closely situated pairs, which face the relatively wide internal cavity.

It localises to the cytoplasm. The catalysed reaction is Deacetylation of xylans and xylo-oligosaccharides.. Its pathway is glycan degradation; xylan degradation. Acetylxylan esterase involved in the degradation of xylan, a major structural heterogeneous polysaccharide found in plant biomass representing the second most abundant polysaccharide in the biosphere, after cellulose. Cleaves acetyl side groups from the xylose backbone units of the hemicellulolytic polymer xylan and xylo-oligosaccharides. Hydrolyzes about 20%-30% of the available acetyl groups on fully acetylated birch wood xylan. Completely deacetylates xylobiose peracetate (fully acetylated), and is active on both the alpha- and beta-forms of the sugar. Also hydrolyzes fully acetylated methyl-beta-D-xylopyranoside and methyl-beta-D-glucopyranoside, and the synthetic substrates 2-naphthyl acetate, 4-nitrophenyl acetate, 4-methylumbelliferyl acetate, and phenyl acetate. This chain is Acetylxylan esterase, found in Geobacillus stearothermophilus (Bacillus stearothermophilus).